A 259-amino-acid chain; its full sequence is Chaplin-C (259 aa).

An N-terminal signal peptide occupies residues 1-28 (MRQATRKGLMTMAAATGVIAAAGGAAHA). One can recognise a Chaplin 1 domain in the interval 39-79 (SPGVLSGNTVQAPVHVPVNVCGNTVDVVGVLNPAMGNACAN). Over residues 84–112 (ASGGHGGHGGHGGYGDSGGEGGSHGGSHA) the composition is skewed to gly residues. Disordered stretches follow at residues 84–129 (ASGG…NHVE) and 154–227 (GNDC…ALAE). One can recognise a Chaplin 2 domain in the interval 119–159 (SPGVGSGNHVEVPIDVPVNVCGNSIDVVGALNPTTGNDCGN). The span at 180–189 (HNPGNPGNPD) shows a compositional bias: low complexity. An LPXTG sorting signal motif is present at residues 225–229 (LAETG). Thr228 bears the Pentaglycyl murein peptidoglycan amidated threonine mark. The propeptide at 229 to 259 (GSDLPLGLALPVGAGALLAGTVLYRKARASV) is removed by sortase.

This sequence belongs to the chaplin family. Long chaplin subfamily.

It localises to the secreted. The protein resides in the cell wall. One of 8 partially redundant surface-active proteins required for efficient formation of aerial mycelium; the short chaplins assemble into a hydrophobic, amyloidal fibrillar surface layer that envelopes and protects aerial hyphae and spores, presumably anchored to the long chaplins. Chaplins have an overlapping function with the surface-active SapB peptide; chaplins are essential on minimal medium while on rich medium both chaplins and SapB are required for efficient aerial hyphae formation. A minimal chaplin strain capable of forming aerial mycelium/hyphae on minimal medium contains ChpC, ChpE and ChpH. The strain also has restored rodlet formation on the hyphae surface. The long chaplins (ChpA, ChpB, ChpC) are not absolutely necessary for short chaplin localization or rodlet formation, but probably play a role in initiating aerial hyphae development. Chaplins are also involved in cell attachment to a hydrophobic surface. The polypeptide is Chaplin-C (Streptomyces coelicolor (strain ATCC BAA-471 / A3(2) / M145)).